The sequence spans 299 residues: Oxygen-dependent coproporphyrinogen-III oxidase (299 aa).

Residue serine 92 participates in substrate binding. The a divalent metal cation site is built by histidine 96 and histidine 106. The active-site Proton donor is histidine 106. Asparagine 108–arginine 110 is a binding site for substrate. Residues histidine 145 and histidine 175 each coordinate a divalent metal cation. The segment at tyrosine 239–glutamate 274 is important for dimerization. Substrate is bound at residue glycine 257–arginine 259.

It belongs to the aerobic coproporphyrinogen-III oxidase family. In terms of assembly, homodimer. The cofactor is a divalent metal cation.

The protein resides in the cytoplasm. It carries out the reaction coproporphyrinogen III + O2 + 2 H(+) = protoporphyrinogen IX + 2 CO2 + 2 H2O. It functions in the pathway porphyrin-containing compound metabolism; protoporphyrin-IX biosynthesis; protoporphyrinogen-IX from coproporphyrinogen-III (O2 route): step 1/1. In terms of biological role, involved in the heme biosynthesis. Catalyzes the aerobic oxidative decarboxylation of propionate groups of rings A and B of coproporphyrinogen-III to yield the vinyl groups in protoporphyrinogen-IX. This Xanthomonas oryzae pv. oryzae (strain MAFF 311018) protein is Oxygen-dependent coproporphyrinogen-III oxidase.